The following is a 3051-amino-acid chain: Biorientation of chromosomes in cell division protein 1-like 1 (3051 aa).

The span at 1–33 (MATNPQPQPPPPAPPPPPPQPQPQPPPPPPGPG) shows a compositional bias: pro residues. Disordered stretches follow at residues 1–47 (MATN…AGAG), 164–197 (HKEE…SANV), 215–288 (ASAA…CPVE), 301–393 (ILLN…KEDF), and 411–469 (VHTS…VRHA). Residues 34 to 47 (AGPGAGGAGGAGAG) are compositionally biased toward gly residues. The span at 215–227 (ASAARASTETSNA) shows a compositional bias: low complexity. Residues 246-263 (STDKERTSEDMADKEKST) are compositionally biased toward basic and acidic residues. S266 is subject to Phosphoserine. Basic and acidic residues predominate over residues 312 to 393 (SEQKNKSTDK…KTVEGTKEDF (82 aa)). Residues 418–443 (SFEEDTEEEVVTSDSMEEGEITSDDE) show a composition bias toward acidic residues. An N6-acetyllysine modification is found at K473. S482 and S484 each carry phosphoserine. Composition is skewed to basic and acidic residues over residues 497–527 (IAKE…EKTK), 549–570 (LEPK…EKKV), and 580–653 (SRNV…LERE). A disordered region spans residues 497-1203 (IAKEKEERLL…EKHADHRSTL (707 aa)). Phosphoserine is present on residues S635 and S659. T660 and T733 each carry phosphothreonine. Composition is skewed to basic and acidic residues over residues 671–772 (TDTR…EENI), 804–852 (KDGK…KIQK), 866–878 (RRSE…KCDM), 940–966 (KPDK…KPFE), 984–1021 (TQKD…DGHK), and 1028–1075 (SSKD…ENRR). S1077 carries the phosphoserine modification. Polar residues-rich tracts occupy residues 1092–1103 (NTLSTPSGSSLQ) and 1135–1148 (SKTQ…SQQD). 2 positions are modified to phosphoserine: S1145 and S1318. T1354 carries the phosphothreonine modification. 3 disordered regions span residues 1456–1550 (KLKH…QSEV), 1700–1725 (GSIS…ETEG), and 1760–1890 (VVLG…TGLG). Over residues 1465-1479 (KVKDISIDVERRNEN) the composition is skewed to basic and acidic residues. Over residues 1482-1504 (VDTSAGSGSAPSVLHQRNGQTED) the composition is skewed to polar residues. Phosphoserine occurs at positions 1531, 1701, and 1710. 4 positions are modified to phosphoserine: S2013, S2025, S2128, and S2203. Disordered stretches follow at residues 2189-2210 (DFEG…STSK), 2258-2285 (TSSV…TPAE), 2403-2447 (STEE…FAGR), 2472-2519 (EDKS…AKDP), 2615-2635 (DQAS…FPEE), and 2717-3051 (VENS…KAKR). Over residues 2191 to 2207 (EGPMPSAPPEAESPLAS) the composition is skewed to low complexity. The span at 2428–2439 (AEKEEKHGKECP) shows a compositional bias: basic and acidic residues. S2475 is subject to Phosphoserine. The span at 2483-2492 (GSSTASYSAG) shows a compositional bias: low complexity. S2501 and S2618 each carry phosphoserine. Basic and acidic residues-rich tracts occupy residues 2621–2633 (KTGD…KSFP), 2724–2746 (TNEE…KDNA), and 2754–2767 (VEAD…EERH). Residues 2780–2789 (SEDEPDDNPD) are compositionally biased toward acidic residues. A compositionally biased stretch (basic and acidic residues) spans 2791-2822 (LDSRIETAQRQCPETEPHDTKEENSRDLEELP). Over residues 2823–2834 (KTSSETNSTTSR) the composition is skewed to polar residues. The segment covering 2848 to 2864 (TGEKPEQNDDDTIKSQE) has biased composition (basic and acidic residues). Residues 2871–2880 (IKRKRGRPRK) show a composition bias toward basic residues. A DNA-binding region (a.T hook) is located at residues 2872 to 2884 (KRKRGRPRKYPVE). Over residues 2896–2910 (DTGIVTVEQSPSSSK) the composition is skewed to polar residues. Residues S2905 and S2907 each carry the phosphoserine modification. Basic residues predominate over residues 2944–2953 (VRRRGRKPKR). Phosphoserine is present on S2954. Residue T2956 is modified to Phosphothreonine. 3 positions are modified to phosphoserine: S2958, S2964, and S2973. Glycyl lysine isopeptide (Lys-Gly) (interchain with G-Cter in ubiquitin) cross-links involve residues K2981 and K2982. The span at 2985–2998 (ESDEEEEEEEEDEP) shows a compositional bias: acidic residues. S2986 and S3019 each carry phosphoserine. The segment covering 3000–3020 (GATTRSTTRSEAQRSKTQLSP) has biased composition (polar residues). Residues 3039–3051 (QRVEEAPVKKAKR) are compositionally biased toward basic and acidic residues.

It belongs to the BOD1 family. In terms of assembly, interacts (via COMPASS-Shg1 domain) with SETD1A at stalled replication forks; this interaction mediates FANCD2-dependent nucleosome remodeling at reversed forks protecting them from nucleolytic degradation.

It localises to the chromosome. Functionally, component of the fork protection machinery required to protect stalled/damaged replication forks from uncontrolled DNA2-dependent resection. Acts by stabilizing RAD51 at stalled replication forks and protecting RAD51 nucleofilaments from the antirecombinogenic activities of FBH1 and BLM. Does not regulate spindle orientation. This chain is Biorientation of chromosomes in cell division protein 1-like 1, found in Homo sapiens (Human).